A 405-amino-acid polypeptide reads, in one-letter code: Arginine biosynthesis bifunctional protein ArgJ (405 aa).

The segment covering 1-18 has biased composition (polar residues); that stretch reads MTSADKNNPDTSTAQGSS. The disordered stretch occupies residues 1–21; that stretch reads MTSADKNNPDTSTAQGSSADL. Substrate-binding residues include T167, K189, T200, E281, N400, and T405. T200 acts as the Nucleophile in catalysis.

It belongs to the ArgJ family. In terms of assembly, heterotetramer of two alpha and two beta chains.

Its subcellular location is the cytoplasm. The catalysed reaction is N(2)-acetyl-L-ornithine + L-glutamate = N-acetyl-L-glutamate + L-ornithine. The enzyme catalyses L-glutamate + acetyl-CoA = N-acetyl-L-glutamate + CoA + H(+). It functions in the pathway amino-acid biosynthesis; L-arginine biosynthesis; L-ornithine and N-acetyl-L-glutamate from L-glutamate and N(2)-acetyl-L-ornithine (cyclic): step 1/1. The protein operates within amino-acid biosynthesis; L-arginine biosynthesis; N(2)-acetyl-L-ornithine from L-glutamate: step 1/4. Catalyzes two activities which are involved in the cyclic version of arginine biosynthesis: the synthesis of N-acetylglutamate from glutamate and acetyl-CoA as the acetyl donor, and of ornithine by transacetylation between N(2)-acetylornithine and glutamate. This is Arginine biosynthesis bifunctional protein ArgJ from Corynebacterium jeikeium (strain K411).